Here is a 99-residue protein sequence, read N- to C-terminus: Large ribosomal subunit protein bL21 (99 aa).

This sequence belongs to the bacterial ribosomal protein bL21 family. In terms of assembly, part of the 50S ribosomal subunit. Contacts protein L20.

This protein binds to 23S rRNA in the presence of protein L20. This Mesoplasma florum (strain ATCC 33453 / NBRC 100688 / NCTC 11704 / L1) (Acholeplasma florum) protein is Large ribosomal subunit protein bL21.